A 319-amino-acid polypeptide reads, in one-letter code: ATP-dependent 6-phosphofructokinase (319 aa).

Residue Gly11 participates in ATP binding. 21–25 provides a ligand contact to ADP; the sequence is RAVVR. ATP contacts are provided by residues 72–73 and 102–105; these read RC and GDGS. Position 103 (Asp103) interacts with Mg(2+). Residue 125-127 coordinates substrate; that stretch reads TID. The active-site Proton acceptor is Asp127. Arg154 is an ADP binding site. Substrate-binding positions include Arg162 and 169–171; that span reads MGR. Residues 185–187, Arg211, and 213–215 contribute to the ADP site; these read GAE and KKH. Substrate is bound by residues Glu222, Arg243, and 249–252; that span reads HIQR.

It belongs to the phosphofructokinase type A (PFKA) family. ATP-dependent PFK group I subfamily. Prokaryotic clade 'B1' sub-subfamily. In terms of assembly, homotetramer. Requires Mg(2+) as cofactor.

Its subcellular location is the cytoplasm. It carries out the reaction beta-D-fructose 6-phosphate + ATP = beta-D-fructose 1,6-bisphosphate + ADP + H(+). It functions in the pathway carbohydrate degradation; glycolysis; D-glyceraldehyde 3-phosphate and glycerone phosphate from D-glucose: step 3/4. With respect to regulation, allosterically activated by ADP and other diphosphonucleosides, and allosterically inhibited by phosphoenolpyruvate. Functionally, catalyzes the phosphorylation of D-fructose 6-phosphate to fructose 1,6-bisphosphate by ATP, the first committing step of glycolysis. This is ATP-dependent 6-phosphofructokinase from Bacillus licheniformis (strain ATCC 14580 / DSM 13 / JCM 2505 / CCUG 7422 / NBRC 12200 / NCIMB 9375 / NCTC 10341 / NRRL NRS-1264 / Gibson 46).